Reading from the N-terminus, the 151-residue chain is Peptide methionine sulfoxide reductase MsrB (151 aa).

In terms of domain architecture, MsrB spans 9-132; sequence DGELKRTLTK…NSAALKFIPF (124 aa). The Nucleophile role is filled by cysteine 121.

The protein belongs to the MsrB Met sulfoxide reductase family.

The enzyme catalyses L-methionyl-[protein] + [thioredoxin]-disulfide + H2O = L-methionyl-(R)-S-oxide-[protein] + [thioredoxin]-dithiol. This chain is Peptide methionine sulfoxide reductase MsrB, found in Mycoplasma pneumoniae (strain ATCC 29342 / M129 / Subtype 1) (Mycoplasmoides pneumoniae).